A 425-amino-acid chain; its full sequence is Succinate--CoA ligase [ADP-forming] subunit beta, mitochondrial (425 aa).

Residues 1–14 (NNHGLQIQQQQQRN) constitute a mitochondrion transit peptide. Residues 23–250 (MELLQEAGVS…SNSAYRQKKI (228 aa)) form the ATP-grasp domain. K40 is subject to N6-acetyllysine. Phosphotyrosine is present on Y46. N6-acetyllysine; alternate is present on K50. K50 is subject to N6-succinyllysine; alternate. Residues K60 and 67–69 (GRG) contribute to the ATP site. An N6-acetyllysine mark is found at K91, K101, K105, and K178. Residues N220 and D234 each coordinate Mg(2+). S241 carries the post-translational modification Phosphoserine. Position 285 (N285) interacts with substrate. A Phosphothreonine modification is found at T303. K330 is subject to N6-acetyllysine. Position 342–344 (342–344 (GIM)) interacts with substrate. K400 carries the N6-acetyllysine modification.

The protein belongs to the succinate/malate CoA ligase beta subunit family. ATP-specific subunit beta subfamily. As to quaternary structure, heterodimer of an alpha and a beta subunit. The beta subunit determines specificity for ATP. Interacts with ALAS2. The cofactor is Mg(2+).

The protein localises to the mitochondrion. The catalysed reaction is succinate + ATP + CoA = succinyl-CoA + ADP + phosphate. Its pathway is carbohydrate metabolism; tricarboxylic acid cycle; succinate from succinyl-CoA (ligase route): step 1/1. In terms of biological role, ATP-specific succinyl-CoA synthetase functions in the citric acid cycle (TCA), coupling the hydrolysis of succinyl-CoA to the synthesis of ATP and thus represents the only step of substrate-level phosphorylation in the TCA. The beta subunit provides nucleotide specificity of the enzyme and binds the substrate succinate, while the binding sites for coenzyme A and phosphate are found in the alpha subunit. In Sus scrofa (Pig), this protein is Succinate--CoA ligase [ADP-forming] subunit beta, mitochondrial.